The chain runs to 265 residues: Small ribosomal subunit protein uS2 (265 aa).

Residues 226-265 are disordered; that stretch reads AAAPNSASVREEEFSADAADEGKGRRAPAKKGDKKADAAE. The segment covering 245–265 has biased composition (basic and acidic residues); that stretch reads DEGKGRRAPAKKGDKKADAAE.

It belongs to the universal ribosomal protein uS2 family.

This Xanthomonas axonopodis pv. citri (strain 306) protein is Small ribosomal subunit protein uS2.